Consider the following 621-residue polypeptide: uncharacterized protein (621 aa).

The protein resides in the plastid. It is found in the chloroplast. This is an uncharacterized protein from Porphyra purpurea (Red seaweed).